A 195-amino-acid chain; its full sequence is Translation machinery-associated protein 22 (195 aa).

Residues 94–165 enclose the SUI1 domain; sequence VLIKRIERNR…EAKEYIEKLL (72 aa). A disordered region spans residues 176–195; it reads EQVDEKKKKKATAPGATPAA.

Belongs to the DENR family. In terms of assembly, interacts with the 40S ribosomal subunit.

It is found in the cytoplasm. The sequence is that of Translation machinery-associated protein 22 (TMA22) from Scheffersomyces stipitis (strain ATCC 58785 / CBS 6054 / NBRC 10063 / NRRL Y-11545) (Yeast).